A 157-amino-acid polypeptide reads, in one-letter code: Arginine repressor (157 aa).

Belongs to the ArgR family.

Its subcellular location is the cytoplasm. It participates in amino-acid biosynthesis; L-arginine biosynthesis [regulation]. Functionally, regulates arginine biosynthesis genes. This is Arginine repressor from Bacteroides fragilis (strain YCH46).